Here is a 245-residue protein sequence, read N- to C-terminus: Myozenin-3 (245 aa).

Ser31 bears the Phosphoserine mark. A binding to ACTN2, PPP3CA and TCAP region spans residues 50–67 (LLFQKRQRRVQKFTFELS). The tract at residues 67–108 (SESLQAILASSARGKVAGRAAQATVPNGLEEQNHHSETHVFQ) is binding to FLNC. The interval 93-134 (NGLEEQNHHSETHVFQGSPGDPGITHLGAAGTGSVRSPSALA) is disordered. The binding to ACTN2 stretch occupies residues 180-201 (PIPRDYRNFNKTPVPFGGPHVR).

The protein belongs to the myozenin family. As to quaternary structure, interacts with ACTN2, LDB3, FLNC, PPP3CA and TCAP. Expressed specifically in skeletal muscle and is enriched in fast-twitch muscle fibers. Not detected in heart.

It localises to the cytoplasm. Its subcellular location is the myofibril. It is found in the sarcomere. The protein resides in the z line. Functionally, myozenins may serve as intracellular binding proteins involved in linking Z line proteins such as alpha-actinin, gamma-filamin, TCAP/telethonin, LDB3/ZASP and localizing calcineurin signaling to the sarcomere. Plays an important role in the modulation of calcineurin signaling. May play a role in myofibrillogenesis. The sequence is that of Myozenin-3 from Mus musculus (Mouse).